We begin with the raw amino-acid sequence, 322 residues long: Beta-ketoacyl-[acyl-carrier-protein] synthase III (322 aa).

Catalysis depends on residues C113 and H249. The interval 250 to 254 (QANIR) is ACP-binding. N279 is a catalytic residue.

It belongs to the thiolase-like superfamily. FabH family. Homodimer.

The protein localises to the cytoplasm. It carries out the reaction malonyl-[ACP] + acetyl-CoA + H(+) = 3-oxobutanoyl-[ACP] + CO2 + CoA. The protein operates within lipid metabolism; fatty acid biosynthesis. In terms of biological role, catalyzes the condensation reaction of fatty acid synthesis by the addition to an acyl acceptor of two carbons from malonyl-ACP. Catalyzes the first condensation reaction which initiates fatty acid synthesis and may therefore play a role in governing the total rate of fatty acid production. Possesses both acetoacetyl-ACP synthase and acetyl transacylase activities. Its substrate specificity determines the biosynthesis of branched-chain and/or straight-chain of fatty acids. This Thioalkalivibrio sulfidiphilus (strain HL-EbGR7) protein is Beta-ketoacyl-[acyl-carrier-protein] synthase III.